The sequence spans 176 residues: Small ribosomal subunit protein bS6 (176 aa).

The interval 97–176 is disordered; the sequence is DQYTPNDSPP…VEPVDTTSEE (80 aa). Over residues 140–160 the composition is skewed to low complexity; the sequence is AVETVEPPAEPAEPVEAVETV. Positions 161 to 176 are enriched in acidic residues; sequence DTTEETVEPVDTTSEE.

This sequence belongs to the bacterial ribosomal protein bS6 family.

Binds together with bS18 to 16S ribosomal RNA. The chain is Small ribosomal subunit protein bS6 from Gloeothece citriformis (strain PCC 7424) (Cyanothece sp. (strain PCC 7424)).